Consider the following 268-residue polypeptide: Phosphatidylglycerol--prolipoprotein diacylglyceryl transferase (268 aa).

The next 7 helical transmembrane spans lie at 27–47 (PALR…MWLL), 66–86 (LLFY…VLFY), 104–124 (GGMS…YIAW), 130–150 (FFAV…AGRI), 181–201 (PSQL…LYWF), 208–228 (VGAV…IVET), and 242–262 (FMTM…YLIL). A 1,2-diacyl-sn-glycero-3-phospho-(1'-sn-glycerol) is bound at residue arginine 149.

This sequence belongs to the Lgt family.

The protein localises to the cell inner membrane. It carries out the reaction L-cysteinyl-[prolipoprotein] + a 1,2-diacyl-sn-glycero-3-phospho-(1'-sn-glycerol) = an S-1,2-diacyl-sn-glyceryl-L-cysteinyl-[prolipoprotein] + sn-glycerol 1-phosphate + H(+). Its pathway is protein modification; lipoprotein biosynthesis (diacylglyceryl transfer). Catalyzes the transfer of the diacylglyceryl group from phosphatidylglycerol to the sulfhydryl group of the N-terminal cysteine of a prolipoprotein, the first step in the formation of mature lipoproteins. This Shewanella sp. (strain MR-4) protein is Phosphatidylglycerol--prolipoprotein diacylglyceryl transferase.